The chain runs to 386 residues: Short-chain dehydrogenase/reductase family 42E member 1 (386 aa).

Catalysis depends on tyrosine 150, which acts as the Proton acceptor. Position 154 (lysine 154) interacts with NAD(+). The next 2 helical transmembrane spans lie at phenylalanine 279–serine 299 and tyrosine 363–proline 383.

The protein belongs to the 3-beta-HSD family.

It localises to the membrane. The chain is Short-chain dehydrogenase/reductase family 42E member 1 (sdr42e1) from Xenopus laevis (African clawed frog).